We begin with the raw amino-acid sequence, 245 residues long: 1-(5-phosphoribosyl)-5-[(5-phosphoribosylamino)methylideneamino] imidazole-4-carboxamide isomerase (245 aa).

Asp8 serves as the catalytic Proton acceptor. Residue Asp129 is the Proton donor of the active site.

This sequence belongs to the HisA/HisF family.

The protein localises to the cytoplasm. The enzyme catalyses 1-(5-phospho-beta-D-ribosyl)-5-[(5-phospho-beta-D-ribosylamino)methylideneamino]imidazole-4-carboxamide = 5-[(5-phospho-1-deoxy-D-ribulos-1-ylimino)methylamino]-1-(5-phospho-beta-D-ribosyl)imidazole-4-carboxamide. Its pathway is amino-acid biosynthesis; L-histidine biosynthesis; L-histidine from 5-phospho-alpha-D-ribose 1-diphosphate: step 4/9. The polypeptide is 1-(5-phosphoribosyl)-5-[(5-phosphoribosylamino)methylideneamino] imidazole-4-carboxamide isomerase (Rhodopseudomonas palustris (strain HaA2)).